We begin with the raw amino-acid sequence, 236 residues long: Protein YIPF6 (236 aa).

N-acetylalanine is present on Ala2. At 2–84 (AEAEESPGDP…HVLYPRKSNT (83 aa)) the chain is on the cytoplasmic side. Ser7 is modified (phosphoserine). A helical membrane pass occupies residues 85–105 (LLRDWDLWGPLILCVTLALML). The Lumenal segment spans residues 106–115 (QRDSADSEKD). The helical transmembrane segment at 116–136 (GGPQFAEVFVIVWFGAVTITL) threads the bilayer. The Cytoplasmic segment spans residues 137–146 (NSKLLGGNIS). The helical transmembrane segment at 147–167 (FFQSLCVLGYCILPLTVAMLI) threads the bilayer. The Lumenal portion of the chain corresponds to 168-184 (CRLVLLADPGPVNFMVR). Residues 185-205 (LFVVIVMFAWSIVASTAFLAD) form a helical membrane-spanning segment. The Cytoplasmic portion of the chain corresponds to 206–212 (SQPPNRR). The helical transmembrane segment at 213–233 (ALAVYPVFLFYFVISWMILTF) threads the bilayer. The Lumenal portion of the chain corresponds to 234 to 236 (TPQ).

The protein belongs to the YIP1 family. Predominantly interacts with YIPF1 or YIPF2, but may also form a ternary complex with YIPF1 and YIPF2. This interaction may stabilize YIPF1 and YIPF2.

It is found in the golgi apparatus membrane. Its function is as follows. May be required for stable YIPF1 and YIPF2 protein expression. In Homo sapiens (Human), this protein is Protein YIPF6 (YIPF6).